The primary structure comprises 459 residues: Vacuolar fusion protein CCZ1 homolog (459 aa).

The protein belongs to the CCZ1 family.

In Nematostella vectensis (Starlet sea anemone), this protein is Vacuolar fusion protein CCZ1 homolog.